The following is a 739-amino-acid chain: Sulfate transporter (739 aa).

A disordered region spans residues 1–44 (MSSENKEQHNLSPRDLPEEAYGFPPELPLGAQRGSSTDLRQFEP). At S12 the chain carries Phosphoserine. Helical transmembrane passes span 112-132 (MMSG…YSLL) and 137-157 (PIYG…FGTS). Residue N205 is glycosylated (N-linked (GlcNAc...) asparagine). A run of 2 helical transmembrane segments spans residues 227 to 247 (FMAG…VSVY) and 255 to 275 (GFVT…LLGL). N357 carries an N-linked (GlcNAc...) asparagine glycan. Transmembrane regions (helical) follow at residues 378 to 398 (LIPN…AITV), 420 to 440 (AIGF…SAAL), 455 to 475 (LSAI…APLF), and 524 to 544 (LLST…CVIL). The STAS domain maps to 568-719 (TYKNLRSKSG…YSLSEAVAFA (152 aa)).

The protein belongs to the SLC26A/SulP transporter (TC 2.A.53) family. Post-translationally, N-glycosylated. Cartilage and intestine. Expressed in the kidney (at protein level).

Its subcellular location is the cell membrane. The protein resides in the apical cell membrane. The enzyme catalyses oxalate(in) + sulfate(out) = oxalate(out) + sulfate(in). It catalyses the reaction sulfate(out) + 2 chloride(in) = sulfate(in) + 2 chloride(out). It carries out the reaction oxalate(out) + 2 chloride(in) = oxalate(in) + 2 chloride(out). The catalysed reaction is bromide(in) + chloride(out) = bromide(out) + chloride(in). The enzyme catalyses nitrate(in) + chloride(out) = nitrate(out) + chloride(in). It catalyses the reaction iodide(in) + chloride(out) = iodide(out) + chloride(in). Functionally, sulfate transporter which mediates sulfate uptake into chondrocytes in order to maintain adequate sulfation of proteoglycans which is needed for cartilage development. Mediates electroneutral anion exchange of sulfate ions for oxalate ions, sulfate and oxalate ions for chloride and/or hydroxyl ions and chloride ions for bromide, iodide and nitrate ions. The coupling of sulfate transport to both hydroxyl and chloride ions likely serves to ensure transport at both acidic pH when most sulfate uptake is mediated by sulfate-hydroxide exchange and alkaline pH when most sulfate uptake is mediated by sulfate-chloride exchange. Essential for chondrocyte proliferation, differentiation and cell size expansion. The sequence is that of Sulfate transporter (Slc26a2) from Rattus norvegicus (Rat).